The primary structure comprises 331 residues: D-alanine--D-alanine ligase (331 aa).

In terms of domain architecture, ATP-grasp spans 122 to 328; sequence KLWYDAIGIP…FHEFLADCIE (207 aa). 152-207 is an ATP binding site; the sequence is AFDKWGKLFVKAARQGSSVGCYSVTNIEQLSDAIDKAFGFSHQVLVEKAVKPRELE. Mg(2+) is bound by residues Asp282, Glu295, and Asn297.

This sequence belongs to the D-alanine--D-alanine ligase family. Requires Mg(2+) as cofactor. Mn(2+) is required as a cofactor.

It localises to the cytoplasm. It catalyses the reaction 2 D-alanine + ATP = D-alanyl-D-alanine + ADP + phosphate + H(+). It functions in the pathway cell wall biogenesis; peptidoglycan biosynthesis. Its function is as follows. Cell wall formation. This Vibrio vulnificus (strain YJ016) protein is D-alanine--D-alanine ligase.